We begin with the raw amino-acid sequence, 214 residues long: Large ribosomal subunit protein uL3 (214 aa).

Gln-151 carries the N5-methylglutamine modification.

It belongs to the universal ribosomal protein uL3 family. Part of the 50S ribosomal subunit. Forms a cluster with proteins L14 and L19. In terms of processing, methylated by PrmB.

Functionally, one of the primary rRNA binding proteins, it binds directly near the 3'-end of the 23S rRNA, where it nucleates assembly of the 50S subunit. This is Large ribosomal subunit protein uL3 from Magnetococcus marinus (strain ATCC BAA-1437 / JCM 17883 / MC-1).